The chain runs to 710 residues: MRDGTTRVNTTGMRLKTITDVLIKLSQSSTHYDSAIFTSHKVKKFNLTTNENEPIEIWVYDDTSSSFPILTEYLKKHLESLIAAANHIFNRNEQLKKHWHETLVYIKKALEERLKFNIDLKQARKLVRDLINEIGFFWINQQPTMITTASQLYKGFLTKLFEAVEIAIPDYKRNHILVIQQTGDIIKCEYYERGTSRSLRSNVENALIEYRFAENTHESEKTKDFPSAHYRGKLGLCNVATCFSATFDANNETTSCKIYYRHASFPPIDLYPLYRQERKELKNTKQRYLKKKNEMEEGGKAMVNWQNRAFKTQQCREGIKLITTRNMEMLRDLMRKNRSELELLPAERPPLIYTNISLLTVKQWMDKDFQEEQYHDTILAAERLRSRGNRENEDKFVPIMFNFGVNLQAKWQRRKSWWRPSLPKEQVFENDRAFFKFNHLVIERLQLIASKKTFSFAKTQALPHLWELNEIASSWNRYEKTLDCLANAYDAACNNYEKDPSKENIEYLQECEEKLSQAKKNLWKVADTHIAFYRKDFKQLIANRSNFSNDDSELQAILKDWKMFNSLYLRDAWHDASFSIQTSIGNLTRVVGSELSINCKSADDRTTGFCRRFEGSEEGKDASSPHVRNDTDGGSIKFTGWAKTKKAKAIAKTEKKIAEAFSTHKLKKAVVAKSKIPTSHSLISSSSFWKLKAPDTSPFLTTNLPHSLSG.

2 coiled-coil regions span residues 273 to 298 (LYRQ…MEEG) and 477 to 528 (RYEK…VADT).

This is an uncharacterized protein from Coxiella burnetii (strain RSA 493 / Nine Mile phase I).